Reading from the N-terminus, the 317-residue chain is Beta-ketoacyl-[acyl-carrier-protein] synthase III (317 aa).

Catalysis depends on residues cysteine 112 and histidine 244. The ACP-binding stretch occupies residues 245 to 249; the sequence is QANLR. The active site involves asparagine 274.

The protein belongs to the thiolase-like superfamily. FabH family. Homodimer.

Its subcellular location is the cytoplasm. The catalysed reaction is malonyl-[ACP] + acetyl-CoA + H(+) = 3-oxobutanoyl-[ACP] + CO2 + CoA. It participates in lipid metabolism; fatty acid biosynthesis. Its function is as follows. Catalyzes the condensation reaction of fatty acid synthesis by the addition to an acyl acceptor of two carbons from malonyl-ACP. Catalyzes the first condensation reaction which initiates fatty acid synthesis and may therefore play a role in governing the total rate of fatty acid production. Possesses both acetoacetyl-ACP synthase and acetyl transacylase activities. Its substrate specificity determines the biosynthesis of branched-chain and/or straight-chain of fatty acids. This is Beta-ketoacyl-[acyl-carrier-protein] synthase III from Enterobacter sp. (strain 638).